The primary structure comprises 460 residues: Equilibrative nucleoside transporter 1 (460 aa).

Residues 1–12 lie on the Cytoplasmic side of the membrane; sequence MTTSHQPQDRYK. The chain crosses the membrane as a helical span at residues 13 to 29; the sequence is AVWLIFFVLGLGTLLPW. The Extracellular segment spans residues 30–82; the sequence is NFFMTATKYFTNRLDVSQNVSSDTDQSCESTKALADPTVALPARSSLSAIFNN. A glycan (N-linked (GlcNAc...) asparagine) is linked at Asn-48. A helical transmembrane segment spans residues 83 to 107; it reads VMTLCAMLPLLVFTCLNSFLHQRIS. Over 108–111 the chain is Cytoplasmic; it reads QSVR. A helical transmembrane segment spans residues 112 to 130; it reads ILGSLLAILLVFLVTAALV. Residues 131-138 lie on the Extracellular side of the membrane; it reads KVEMDALI. Residues 139 to 157 traverse the membrane as a helical segment; sequence FFVITMIKIVLINSFGAIL. Residues 158–174 are Cytoplasmic-facing; that stretch reads QASLFGLAGVLPANYTA. A helical transmembrane segment spans residues 175 to 199; sequence PIMSGQGLAGFFTSVAMICAIASGS. Residues 200-206 lie on the Extracellular side of the membrane; it reads ELSESAF. The chain crosses the membrane as a helical span at residues 207-227; that stretch reads GYFITACAVVILAILCYLALP. Residues 228 to 291 lie on the Cytoplasmic side of the membrane; it reads RTEFYRHYLQ…IKAILKSICV (64 aa). Position 254 is a phosphoserine (Ser-254). The segment covering 255–266 has biased composition (basic and acidic residues); the sequence is KGEEPKGRREES. Residues 255–277 are disordered; that stretch reads KGEEPKGRREESGVPGPNSPPTN. Ser-273 carries the phosphoserine modification. The helical transmembrane segment at 292 to 311 threads the bilayer; sequence PALSVCFIFTVTIGLFPAVT. Topologically, residues 312–323 are extracellular; the sequence is AEVESSIAGTSP. A helical membrane pass occupies residues 324–342; sequence WKSYFIPVACFLNFNVFDW. The Cytoplasmic portion of the chain corresponds to 343-359; the sequence is LGRSLTAVCMWPGQDSR. The helical transmembrane segment at 360–378 threads the bilayer; that stretch reads WLPVLVASRIVFIPLLMLC. Residues 379-397 are Extracellular-facing; sequence NVKARHCGAQRHHFVFKHD. A helical transmembrane segment spans residues 398–417; it reads AWFIAFMAAFAFSNGYLASL. The Cytoplasmic portion of the chain corresponds to 418 to 435; that stretch reads CMCFGPKKVKPAEAETAG. A helical membrane pass occupies residues 436 to 456; sequence NIMSFFLCLGLALGAVLSFLL. At 457 to 460 the chain is on the extracellular side; it reads RALV.

Belongs to the SLC29A/ENT transporter (TC 2.A.57) family. As to quaternary structure, identified in a complex with STOM. In terms of processing, glycosylated. As to expression, highly expressed in heart, spleen, lung, liver and testis. Lower level of expression in brain and kidney. Expressed in adipose tissues, brown adipocytes expressing significantly higher amounts than white adipocytes. Expressed in seminiferous tubules.

It is found in the basolateral cell membrane. The protein resides in the apical cell membrane. The protein localises to the cell membrane. It catalyses the reaction adenosine(in) = adenosine(out). The enzyme catalyses guanosine(in) = guanosine(out). The catalysed reaction is inosine(in) = inosine(out). It carries out the reaction uridine(out) = uridine(in). It catalyses the reaction thymidine(in) = thymidine(out). The enzyme catalyses cytidine(in) = cytidine(out). The catalysed reaction is adenine(out) = adenine(in). It carries out the reaction guanine(out) = guanine(in). It catalyses the reaction thymine(out) = thymine(in). The enzyme catalyses uracil(in) = uracil(out). The catalysed reaction is hypoxanthine(out) = hypoxanthine(in). With respect to regulation, transporter activity is sensitive to low concentrations of the inhibitor nitrobenzylmercaptopurine riboside (NBMPR). Functionally, uniporter involved in the facilitative transport of nucleosides and nucleobases, and contributes to maintaining their cellular homeostasis. Functions as a Na(+)-independent transporter. Involved in the transport of nucleosides such as adenosine, guanosine, inosine, uridine, thymidine and cytidine. Also transports purine (hypoxanthine, adenine, guanine) and pyrimidine nucleobases (thymine, uracil). Mediates basolateral nucleoside uptake into Sertoli cells, thereby regulating the transport of nucleosides in testis across the blood-testis-barrier. Regulates inosine levels in brown adipocytes tissues (BAT) and extracellular inosine levels, which controls BAT-dependent energy expenditure. This Mus musculus (Mouse) protein is Equilibrative nucleoside transporter 1.